The chain runs to 491 residues: Glutamyl-tRNA(Gln) amidotransferase subunit A (491 aa).

Catalysis depends on charge relay system residues Lys-78 and Ser-158. Ser-182 functions as the Acyl-ester intermediate in the catalytic mechanism.

This sequence belongs to the amidase family. GatA subfamily. Heterotrimer of A, B and C subunits.

It catalyses the reaction L-glutamyl-tRNA(Gln) + L-glutamine + ATP + H2O = L-glutaminyl-tRNA(Gln) + L-glutamate + ADP + phosphate + H(+). Functionally, allows the formation of correctly charged Gln-tRNA(Gln) through the transamidation of misacylated Glu-tRNA(Gln) in organisms which lack glutaminyl-tRNA synthetase. The reaction takes place in the presence of glutamine and ATP through an activated gamma-phospho-Glu-tRNA(Gln). The chain is Glutamyl-tRNA(Gln) amidotransferase subunit A from Nitrobacter hamburgensis (strain DSM 10229 / NCIMB 13809 / X14).